The following is a 372-amino-acid chain: 4-hydroxy-3-methylbut-2-en-1-yl diphosphate synthase (flavodoxin) (372 aa).

The [4Fe-4S] cluster site is built by cysteine 270, cysteine 273, cysteine 305, and glutamate 312.

It belongs to the IspG family. Requires [4Fe-4S] cluster as cofactor.

The catalysed reaction is (2E)-4-hydroxy-3-methylbut-2-enyl diphosphate + oxidized [flavodoxin] + H2O + 2 H(+) = 2-C-methyl-D-erythritol 2,4-cyclic diphosphate + reduced [flavodoxin]. The protein operates within isoprenoid biosynthesis; isopentenyl diphosphate biosynthesis via DXP pathway; isopentenyl diphosphate from 1-deoxy-D-xylulose 5-phosphate: step 5/6. Its function is as follows. Converts 2C-methyl-D-erythritol 2,4-cyclodiphosphate (ME-2,4cPP) into 1-hydroxy-2-methyl-2-(E)-butenyl 4-diphosphate. The polypeptide is 4-hydroxy-3-methylbut-2-en-1-yl diphosphate synthase (flavodoxin) (Salmonella gallinarum (strain 287/91 / NCTC 13346)).